Consider the following 220-residue polypeptide: Large ribosomal subunit protein uL10c (220 aa).

The transit peptide at 1–41 (MEVALLSFSSSLSPLCHQRISTLTPKTSNSPNYPRLPVIRS) directs the protein to the chloroplast.

The protein belongs to the universal ribosomal protein uL10 family. In terms of assembly, part of the 50S ribosomal subunit.

The protein localises to the plastid. Its subcellular location is the chloroplast. This protein binds directly to 23S ribosomal RNA. The sequence is that of Large ribosomal subunit protein uL10c (RPL10) from Arabidopsis thaliana (Mouse-ear cress).